A 391-amino-acid chain; its full sequence is Heme A synthase (391 aa).

Transmembrane regions (helical) follow at residues 37–57, 121–141, 152–172, 186–206, 229–249, 298–318, 332–352, and 354–374; these read IRLW…VGGL, RQLG…FLAA, LLAL…MVAS, LATH…QALL, TTVL…VAGI, FLHR…WIFG, LLAM…LSAA, and WQVA…ILHA. Position 300 (His-300) interacts with heme. Heme is bound at residue His-360.

The protein belongs to the COX15/CtaA family. Type 2 subfamily. As to quaternary structure, interacts with CtaB. The cofactor is heme b.

It localises to the cell membrane. The catalysed reaction is Fe(II)-heme o + 2 A + H2O = Fe(II)-heme a + 2 AH2. It functions in the pathway porphyrin-containing compound metabolism; heme A biosynthesis; heme A from heme O: step 1/1. In terms of biological role, catalyzes the conversion of heme O to heme A by two successive hydroxylations of the methyl group at C8. The first hydroxylation forms heme I, the second hydroxylation results in an unstable dihydroxymethyl group, which spontaneously dehydrates, resulting in the formyl group of heme A. The protein is Heme A synthase of Cereibacter sphaeroides (strain ATCC 17029 / ATH 2.4.9) (Rhodobacter sphaeroides).